A 287-amino-acid polypeptide reads, in one-letter code: Undecaprenyl-diphosphatase (287 aa).

The next 7 membrane-spanning stretches (helical) occupy residues 6–26, 45–65, 89–109, 111–131, 204–224, 238–258, and 266–286; these read LHLL…FIPV, SGKV…MWIF, NLLL…KSIK, VFYH…IMLW, ATEF…VYDL, AIAV…RAVL, and YRVF…WIYA.

The protein belongs to the UppP family.

It localises to the cell inner membrane. The enzyme catalyses di-trans,octa-cis-undecaprenyl diphosphate + H2O = di-trans,octa-cis-undecaprenyl phosphate + phosphate + H(+). Catalyzes the dephosphorylation of undecaprenyl diphosphate (UPP). Confers resistance to bacitracin. In Bordetella pertussis (strain Tohama I / ATCC BAA-589 / NCTC 13251), this protein is Undecaprenyl-diphosphatase.